An 84-amino-acid polypeptide reads, in one-letter code: Putative defensin-like protein 165 (84 aa).

Residues methionine 1–alanine 27 form the signal peptide. 4 cysteine pairs are disulfide-bonded: cysteine 31/cysteine 78, cysteine 41/cysteine 60, cysteine 46/cysteine 72, and cysteine 50/cysteine 74.

It belongs to the DEFL family.

Its subcellular location is the secreted. The protein is Putative defensin-like protein 165 (LCR12) of Arabidopsis thaliana (Mouse-ear cress).